A 469-amino-acid polypeptide reads, in one-letter code: Cytosolic beta-glucosidase (469 aa).

Substrate contacts are provided by glutamine 17, histidine 120, and asparagine 164. Residue glutamate 165 is the Proton donor of the active site. Tyrosine 309 is a binding site for substrate. Glutamate 373 acts as the Nucleophile in catalysis. Substrate-binding positions include tryptophan 417 and glutamate 424 to tryptophan 425.

Belongs to the glycosyl hydrolase 1 family. Klotho subfamily. The N-terminus is blocked. Present in hepatocytes (at protein level).

The protein localises to the cytoplasm. It localises to the cytosol. The catalysed reaction is Hydrolysis of terminal, non-reducing beta-D-glucosyl residues with release of beta-D-glucose.. The enzyme catalyses a beta-D-glucosyl-(1&lt;-&gt;1')-N-acylsphing-4-enine + H2O = an N-acylsphing-4-enine + D-glucose. It carries out the reaction a beta-D-galactosyl-(1&lt;-&gt;1')-N-acylsphing-4-enine + H2O = an N-acylsphing-4-enine + D-galactose. It catalyses the reaction beta-D-glucosyl-(1&lt;-&gt;1)-sphing-4-enine + H2O = sphing-4-enine + D-glucose. The catalysed reaction is beta-D-glucosyl-(1&lt;-&gt;1)-N-octadecanoylsphing-4-enine + H2O = N-octadecanoylsphing-4-enine + D-glucose. The enzyme catalyses beta-D-galactosyl-(1&lt;-&gt;1)-sphing-4-enine + H2O = sphing-4-enine + D-galactose. It carries out the reaction beta-D-galactosyl-(1&lt;-&gt;1')-N-octadecanoylsphing-4-enine + H2O = N-octadecanoylsphing-4-enine + D-galactose. It catalyses the reaction a beta-D-xylosyl-(1&lt;-&gt;1')-N-acylsphing-4-enine + cholesterol = cholesteryl 3-beta-D-xyloside + an N-acylsphing-4-enine. Inhibited by 2,4-dinitrophenyl-2-fluoro-2-deoxy-beta-D-glucopyranoside. Neutral cytosolic beta-glycosidase with a broad substrate specificity that could play a role in the catabolism of glycosylceramides. Has a significant glucosylceramidase activity in vitro. However, that activity is relatively low and its significance in vivo is not clear. Hydrolyzes galactosylceramide/GalCer, glucosylsphingosine/GlcSph and galactosylsphingosine/GalSph. However, the in vivo relevance of these activities is unclear. It can also hydrolyze a broad variety of dietary glycosides including phytoestrogens, flavonols, flavones, flavanones and cyanogens in vitro and could therefore play a role in the metabolism of xenobiotics. Possesses transxylosylase activity in vitro using xylosylated ceramides/XylCers (such as beta-D-xylosyl-(1&lt;-&gt;1')-N-acylsphing-4-enine) as xylosyl donors and cholesterol as acceptor. Could also play a role in the catabolism of cytosolic sialyl free N-glycans. This is Cytosolic beta-glucosidase from Cavia porcellus (Guinea pig).